A 123-amino-acid polypeptide reads, in one-letter code: Gamma-synuclein (123 aa).

2 consecutive repeat copies span residues glutamate 20–alanine 30 and glutamate 31–glycine 41. The interval glutamate 20–serine 67 is 4 X 11 AA tandem repeats of [EGSA]-K-T-K-[EQ]-[GQ]-V-X(4). A 3; approximate repeat occupies threonine 42 to alanine 56. The stretch at glutamate 57–serine 67 is repeat 4. A phosphoserine mark is found at serine 67 and serine 72. Positions glycine 93–aspartate 123 are disordered. Basic and acidic residues predominate over residues glutamine 107–aspartate 123. Serine 120 is modified (phosphoserine; by BARK1, CaMK2 and CK2).

The protein belongs to the synuclein family. In terms of assembly, may be a centrosome-associated protein. Interacts with MYOC; affects its secretion and its aggregation. Post-translationally, phosphorylated. Phosphorylation by GRK5 appears to occur on residues distinct from the residue phosphorylated by other kinases. As to expression, specifically expressed in the peripheral nervous system. High expression in motoneurons of the brainstem. Also found in neurons of many other brain regions including the cerebellar cortex, thalamus, hypothalamus and CA1, CA2, CA3 and CA4 regions of the hippocampus.

The protein localises to the cytoplasm. The protein resides in the perinuclear region. It is found in the cytoskeleton. It localises to the microtubule organizing center. Its subcellular location is the centrosome. The protein localises to the spindle. Functionally, plays a role in neurofilament network integrity. May be involved in modulating axonal architecture during development and in the adult. In vitro, increases the susceptibility of neurofilament-H to calcium-dependent proteases. May also function in modulating the keratin network in skin. Activates the MAPK and Elk-1 signal transduction pathway. This chain is Gamma-synuclein (Sncg), found in Rattus norvegicus (Rat).